The primary structure comprises 165 residues: MSGKLTHIDQTGAANMVDVGSKDETERQAVAEGAVRMKPETLALILEGNAAKGDVIGTARLAGIMAAKRTSDLIPLCHPLMLTKVAVEIEPDENLPGLRVRALARLKGRTGVEMEALTAASVTCLTIYDMAKAVDRHMEIGSIRVIEKSGGKSGDWAVSDPALMR.

Substrate contacts are provided by residues 76-78 (LCH) and 114-115 (ME). Residue D129 is part of the active site.

The protein belongs to the MoaC family. In terms of assembly, homohexamer; trimer of dimers.

It carries out the reaction (8S)-3',8-cyclo-7,8-dihydroguanosine 5'-triphosphate = cyclic pyranopterin phosphate + diphosphate. The protein operates within cofactor biosynthesis; molybdopterin biosynthesis. Catalyzes the conversion of (8S)-3',8-cyclo-7,8-dihydroguanosine 5'-triphosphate to cyclic pyranopterin monophosphate (cPMP). In Brucella abortus (strain 2308), this protein is Cyclic pyranopterin monophosphate synthase.